Here is a 455-residue protein sequence, read N- to C-terminus: Dihydrolipoyllysine-residue succinyltransferase component of 2-oxoglutarate dehydrogenase complex, mitochondrial (455 aa).

The N-terminal 68 residues, 1–68, are a transit peptide targeting the mitochondrion; it reads MLSRSRCVSR…RFFRTTAVCK (68 aa). Positions 71–145 constitute a Lipoyl-binding domain; sequence VITVKTPAFA…EGGTPLFTLR (75 aa). Position 82 is a phosphoserine (S82). Position 111 is an N6-lipoyllysine (K111). Low complexity predominate over residues 153–173; that stretch reads KAKPAEAPAAAAPKAEPAVSA. The interval 153–214 is disordered; the sequence is KAKPAEAPAA…KPTAAPPVAE (62 aa). Residue K155 is modified to N6-acetyllysine. Residues 174–195 are compositionally biased toward pro residues; it reads VPPPPAASIPTQMPPVPSPPQP. Residues 221 to 453 form a catalytic region; sequence LRAEHREKMN…AVEDPRVLLL (233 aa). 5 positions are modified to N6-acetyllysine: K269, K274, K275, K279, and K309. Active-site residues include H426 and D430.

The protein belongs to the 2-oxoacid dehydrogenase family. In terms of assembly, the 2-oxoglutarate dehydrogenase complex is composed of OGDH (2-oxoglutarate dehydrogenase; E1), DLST (dihydrolipoamide succinyltransferase; E2), DLD (dihydrolipoamide dehydrogenase; E3) and the assembly factor KGD4. It contains multiple copies of the three enzymatic components (E1, E2 and E3). In the nucleus, the 2-oxoglutarate dehydrogenase complex associates with KAT2A. Interacts with ABHD11; this interaction maintains the functional lipoylation of the 2-oxoglutarate dehydrogenase complex. Requires (R)-lipoate as cofactor.

The protein localises to the mitochondrion matrix. It localises to the nucleus. It carries out the reaction N(6)-[(R)-dihydrolipoyl]-L-lysyl-[protein] + succinyl-CoA = N(6)-[(R)-S(8)-succinyldihydrolipoyl]-L-lysyl-[protein] + CoA. It participates in amino-acid degradation; L-lysine degradation via saccharopine pathway; glutaryl-CoA from L-lysine: step 6/6. Its pathway is carbohydrate metabolism; tricarboxylic acid cycle. Functionally, dihydrolipoamide succinyltransferase (E2) component of the 2-oxoglutarate dehydrogenase complex. The 2-oxoglutarate dehydrogenase complex catalyzes the overall conversion of 2-oxoglutarate to succinyl-CoA and CO(2). The 2-oxoglutarate dehydrogenase complex is mainly active in the mitochondrion. A fraction of the 2-oxoglutarate dehydrogenase complex also localizes in the nucleus and is required for lysine succinylation of histones: associates with KAT2A on chromatin and provides succinyl-CoA to histone succinyltransferase KAT2A. The protein is Dihydrolipoyllysine-residue succinyltransferase component of 2-oxoglutarate dehydrogenase complex, mitochondrial of Sus scrofa (Pig).